The primary structure comprises 457 residues: Glucuronide carrier protein homolog (457 aa).

The Cytoplasmic portion of the chain corresponds to 1–11; that stretch reads MNQQLSWRTIV. The helical transmembrane segment at 12–34 threads the bilayer; that stretch reads GYSLGDVANNFAFAMGALFLLSY. The Periplasmic segment spans residues 35–37; the sequence is YTD. Residues 38-60 form a helical membrane-spanning segment; it reads VAGVGAAAAGTMLLLVRVFDAFA. Over 61–79 the chain is Cytoplasmic; sequence DVFAGRVVDSVNTRWGKFR. A helical membrane pass occupies residues 80-100; the sequence is PFLLFGTAPLMIFSVLVFWVL. The Periplasmic segment spans residues 101–108; it reads TDWSHGSK. A helical transmembrane segment spans residues 109–129; the sequence is VVYAYLTYMGLGLCYSLVNIP. Topologically, residues 130 to 146 are cytoplasmic; sequence YGSLATAMTQQPQSRAR. Residues 147 to 167 form a helical membrane-spanning segment; sequence LGAARGIAASLTFVCLAFLIG. Topologically, residues 168–180 are periplasmic; sequence PSIKNSSPEEMVS. Residues 181–201 form a helical membrane-spanning segment; sequence VYHFWTIVLAIAGMVLYFICF. Topologically, residues 202–228 are cytoplasmic; the sequence is KSTRENVVRIVAQPSLNISLQTLKRNR. Residues 229 to 249 form a helical membrane-spanning segment; that stretch reads PLFMLCIGALCVLISTFAVSA. The Periplasmic portion of the chain corresponds to 250–263; it reads SSLFYVRYVLNDTG. The chain crosses the membrane as a helical span at residues 264–284; it reads LFTVLVLVQNLVGTVASAPLV. The Cytoplasmic portion of the chain corresponds to 285–296; the sequence is PGMVARIGKKNT. A helical transmembrane segment spans residues 297–316; sequence FLIGALLGTCGYLLFFWVSV. Residues 317 to 320 are Periplasmic-facing; that stretch reads WSLP. The chain crosses the membrane as a helical span at residues 321-343; that stretch reads VALVALAIASIGQGVTMTVMWAL. Topologically, residues 344–372 are cytoplasmic; it reads EADTVEYGEYLTGVRIEGLTYSLFSFTRK. The chain crosses the membrane as a helical span at residues 373-393; it reads CGQAIGGSIPAFILGLSGYIA. Topologically, residues 394–408 are periplasmic; sequence NQVQTPEVIMGIRTS. A helical membrane pass occupies residues 409–429; sequence IALVPCGFMLLAFVIIWFYPL. Residues 430 to 457 lie on the Cytoplasmic side of the membrane; sequence TDKKFKEIVVEIDNRKKVQQQLISDITN.

Belongs to the sodium:galactoside symporter (TC 2.A.2) family.

The protein resides in the cell inner membrane. This Escherichia coli (strain K12) protein is Glucuronide carrier protein homolog (uidB).